The chain runs to 226 residues: Putative DNA repair protein recA homolog 4 (226 aa).

Residue 41–48 (GPEASGKT) coordinates ATP.

It belongs to the RecA family.

It is found in the cytoplasm. Its function is as follows. Involved in recombination ability and DNA strand transfer activity. This is Putative DNA repair protein recA homolog 4 from Arabidopsis thaliana (Mouse-ear cress).